Reading from the N-terminus, the 328-residue chain is tRNA uridine(34) hydroxylase (328 aa).

Residues 130 to 224 form the Rhodanese domain; the sequence is LDEDTIVLDT…YGKDPEVQGE (95 aa). Cys184 serves as the catalytic Cysteine persulfide intermediate.

This sequence belongs to the TrhO family.

It carries out the reaction uridine(34) in tRNA + AH2 + O2 = 5-hydroxyuridine(34) in tRNA + A + H2O. Functionally, catalyzes oxygen-dependent 5-hydroxyuridine (ho5U) modification at position 34 in tRNAs. This Streptococcus uberis (strain ATCC BAA-854 / 0140J) protein is tRNA uridine(34) hydroxylase.